A 461-amino-acid chain; its full sequence is Phosphomethylpyrimidine synthase (461 aa).

Substrate contacts are provided by residues asparagine 80, methionine 109, tyrosine 139, histidine 175, 195 to 197, 236 to 239, and glutamate 275; these read SRG and DSLR. Residue histidine 279 participates in Zn(2+) binding. Tyrosine 302 contributes to the substrate binding site. Position 343 (histidine 343) interacts with Zn(2+). Cysteine 423, cysteine 426, and cysteine 431 together coordinate [4Fe-4S] cluster.

Belongs to the ThiC family. Requires [4Fe-4S] cluster as cofactor.

It catalyses the reaction 5-amino-1-(5-phospho-beta-D-ribosyl)imidazole + S-adenosyl-L-methionine = 4-amino-2-methyl-5-(phosphooxymethyl)pyrimidine + CO + 5'-deoxyadenosine + formate + L-methionine + 3 H(+). The protein operates within cofactor biosynthesis; thiamine diphosphate biosynthesis. Catalyzes the synthesis of the hydroxymethylpyrimidine phosphate (HMP-P) moiety of thiamine from aminoimidazole ribotide (AIR) in a radical S-adenosyl-L-methionine (SAM)-dependent reaction. The polypeptide is Phosphomethylpyrimidine synthase (Picosynechococcus sp. (strain ATCC 27264 / PCC 7002 / PR-6) (Agmenellum quadruplicatum)).